A 345-amino-acid chain; its full sequence is Alanine racemase (345 aa).

Residue Lys-33 is the Proton acceptor; specific for D-alanine of the active site. Lys-33 is modified (N6-(pyridoxal phosphate)lysine). Arg-128 provides a ligand contact to substrate. Tyr-242 functions as the Proton acceptor; specific for L-alanine in the catalytic mechanism. Residue Met-291 coordinates substrate.

Belongs to the alanine racemase family. It depends on pyridoxal 5'-phosphate as a cofactor.

It carries out the reaction L-alanine = D-alanine. Its pathway is amino-acid biosynthesis; D-alanine biosynthesis; D-alanine from L-alanine: step 1/1. In terms of biological role, catalyzes the interconversion of L-alanine and D-alanine. May also act on other amino acids. This is Alanine racemase (alr) from Ruegeria sp. (strain TM1040) (Silicibacter sp.).